Consider the following 66-residue polypeptide: UPF0150 protein AF_0072.1 (66 aa).

Belongs to the UPF0150 family.

This Archaeoglobus fulgidus (strain ATCC 49558 / DSM 4304 / JCM 9628 / NBRC 100126 / VC-16) protein is UPF0150 protein AF_0072.1.